The sequence spans 143 residues: Nucleoside diphosphate kinase (143 aa).

Residues lysine 11, phenylalanine 59, arginine 87, threonine 93, arginine 104, and asparagine 114 each contribute to the ATP site. Residue histidine 117 is the Pros-phosphohistidine intermediate of the active site.

The protein belongs to the NDK family. As to quaternary structure, homotetramer. It depends on Mg(2+) as a cofactor.

The protein resides in the cytoplasm. The catalysed reaction is a 2'-deoxyribonucleoside 5'-diphosphate + ATP = a 2'-deoxyribonucleoside 5'-triphosphate + ADP. The enzyme catalyses a ribonucleoside 5'-diphosphate + ATP = a ribonucleoside 5'-triphosphate + ADP. In terms of biological role, major role in the synthesis of nucleoside triphosphates other than ATP. The ATP gamma phosphate is transferred to the NDP beta phosphate via a ping-pong mechanism, using a phosphorylated active-site intermediate. The protein is Nucleoside diphosphate kinase of Azotobacter vinelandii (strain DJ / ATCC BAA-1303).